We begin with the raw amino-acid sequence, 319 residues long: 4-hydroxy-3-methylbut-2-enyl diphosphate reductase (319 aa).

Cysteine 17 contributes to the [4Fe-4S] cluster binding site. (2E)-4-hydroxy-3-methylbut-2-enyl diphosphate-binding residues include histidine 46 and histidine 79. Dimethylallyl diphosphate contacts are provided by histidine 46 and histidine 79. Isopentenyl diphosphate contacts are provided by histidine 46 and histidine 79. Position 101 (cysteine 101) interacts with [4Fe-4S] cluster. Histidine 129 provides a ligand contact to (2E)-4-hydroxy-3-methylbut-2-enyl diphosphate. Position 129 (histidine 129) interacts with dimethylallyl diphosphate. Histidine 129 contacts isopentenyl diphosphate. The active-site Proton donor is glutamate 131. Threonine 170 contacts (2E)-4-hydroxy-3-methylbut-2-enyl diphosphate. Residue cysteine 200 participates in [4Fe-4S] cluster binding. Positions 228, 229, 230, and 273 each coordinate (2E)-4-hydroxy-3-methylbut-2-enyl diphosphate. Dimethylallyl diphosphate-binding residues include serine 228, serine 229, asparagine 230, and serine 273. Isopentenyl diphosphate contacts are provided by serine 228, serine 229, asparagine 230, and serine 273.

The protein belongs to the IspH family. [4Fe-4S] cluster serves as cofactor.

It catalyses the reaction isopentenyl diphosphate + 2 oxidized [2Fe-2S]-[ferredoxin] + H2O = (2E)-4-hydroxy-3-methylbut-2-enyl diphosphate + 2 reduced [2Fe-2S]-[ferredoxin] + 2 H(+). It carries out the reaction dimethylallyl diphosphate + 2 oxidized [2Fe-2S]-[ferredoxin] + H2O = (2E)-4-hydroxy-3-methylbut-2-enyl diphosphate + 2 reduced [2Fe-2S]-[ferredoxin] + 2 H(+). Its pathway is isoprenoid biosynthesis; dimethylallyl diphosphate biosynthesis; dimethylallyl diphosphate from (2E)-4-hydroxy-3-methylbutenyl diphosphate: step 1/1. It functions in the pathway isoprenoid biosynthesis; isopentenyl diphosphate biosynthesis via DXP pathway; isopentenyl diphosphate from 1-deoxy-D-xylulose 5-phosphate: step 6/6. Functionally, catalyzes the conversion of 1-hydroxy-2-methyl-2-(E)-butenyl 4-diphosphate (HMBPP) into a mixture of isopentenyl diphosphate (IPP) and dimethylallyl diphosphate (DMAPP). Acts in the terminal step of the DOXP/MEP pathway for isoprenoid precursor biosynthesis. This is 4-hydroxy-3-methylbut-2-enyl diphosphate reductase from Cereibacter sphaeroides (strain ATCC 17025 / ATH 2.4.3) (Rhodobacter sphaeroides).